The sequence spans 268 residues: 4-hydroxy-tetrahydrodipicolinate reductase (268 aa).

NAD(+)-binding positions include 10 to 15 (GAGGRM), aspartate 36, 99 to 101 (GTT), and 123 to 126 (APNM). Histidine 156 serves as the catalytic Proton donor/acceptor. Histidine 157 is a (S)-2,3,4,5-tetrahydrodipicolinate binding site. Lysine 160 acts as the Proton donor in catalysis. Residue 166–167 (GT) coordinates (S)-2,3,4,5-tetrahydrodipicolinate.

This sequence belongs to the DapB family.

The protein resides in the cytoplasm. It carries out the reaction (S)-2,3,4,5-tetrahydrodipicolinate + NAD(+) + H2O = (2S,4S)-4-hydroxy-2,3,4,5-tetrahydrodipicolinate + NADH + H(+). The catalysed reaction is (S)-2,3,4,5-tetrahydrodipicolinate + NADP(+) + H2O = (2S,4S)-4-hydroxy-2,3,4,5-tetrahydrodipicolinate + NADPH + H(+). It participates in amino-acid biosynthesis; L-lysine biosynthesis via DAP pathway; (S)-tetrahydrodipicolinate from L-aspartate: step 4/4. Functionally, catalyzes the conversion of 4-hydroxy-tetrahydrodipicolinate (HTPA) to tetrahydrodipicolinate. In Dechloromonas aromatica (strain RCB), this protein is 4-hydroxy-tetrahydrodipicolinate reductase.